The primary structure comprises 88 residues: Putative membrane protein insertion efficiency factor (88 aa).

This sequence belongs to the UPF0161 family.

It localises to the cell membrane. Its function is as follows. Could be involved in insertion of integral membrane proteins into the membrane. The polypeptide is Putative membrane protein insertion efficiency factor (yrcB) (Lactococcus lactis subsp. lactis (strain IL1403) (Streptococcus lactis)).